The primary structure comprises 394 residues: Elongation factor Tu (394 aa).

Residues 10 to 204 (KPHVNVGTIG…ALDTYIPEPE (195 aa)) form the tr-type G domain. The segment at 19–26 (GHVDHGKT) is G1. 19–26 (GHVDHGKT) is a binding site for GTP. Residue T26 coordinates Mg(2+). Residues 60–64 (GITIN) form a G2 region. The tract at residues 81–84 (DCPG) is G3. Residues 81-85 (DCPGH) and 136-139 (NKCD) each bind GTP. Positions 136 to 139 (NKCD) are G4. The segment at 174–176 (SAL) is G5.

Belongs to the TRAFAC class translation factor GTPase superfamily. Classic translation factor GTPase family. EF-Tu/EF-1A subfamily. In terms of assembly, monomer.

The protein resides in the cytoplasm. The catalysed reaction is GTP + H2O = GDP + phosphate + H(+). GTP hydrolase that promotes the GTP-dependent binding of aminoacyl-tRNA to the A-site of ribosomes during protein biosynthesis. In Shewanella sediminis (strain HAW-EB3), this protein is Elongation factor Tu.